Consider the following 1294-residue polypeptide: Ethylene-insensitive protein 2 (1294 aa).

At 1–12 (MEAEIVNVRPQL) the chain is on the cytoplasmic side. The helical transmembrane segment at 13-33 (GFIQRMVPALLPVLLVSVGYI) threads the bilayer. At 34-50 (DPGKWVANIEGGARFGY) the chain is on the extracellular side. Residues 51 to 71 (DLVAITLLFNFAAILCQYVAA) traverse the membrane as a helical segment. The Cytoplasmic segment spans residues 72–105 (RISVVTGKHLAQICNEEYDKWTCMFLGIQAEFSA). The chain crosses the membrane as a helical span at residues 106-126 (ILLDLTMVVGVAHALNLLFGV). Glu127 is a topological domain (extracellular). A helical transmembrane segment spans residues 128-148 (LSTGVFLAAMDAFLFPVFASF). The Cytoplasmic segment spans residues 149-155 (LENGMAN). Residues 156 to 176 (TVSIYSAGLVLLLYVSGVLLS) form a helical membrane-spanning segment. The Extracellular portion of the chain corresponds to 177 to 194 (QSEIPLSMNGVLTRLNGE). The helical transmembrane segment at 195-215 (SAFALMGLLGASIVPHNFYIH) threads the bilayer. Residues 216-237 (SYFAGESTSSSDVDKSSLCQDH) lie on the Cytoplasmic side of the membrane. Residues 238–258 (LFAIFGVFSGLSLVNYVLMNA) traverse the membrane as a helical segment. Topologically, residues 259 to 287 (AANVFHSTGLVVLTFHDALSLMEQVFMSP) are extracellular. Residues 288–308 (LIPVVFLMLLFFSSQITALAW) form a helical membrane-spanning segment. Topologically, residues 309-334 (AFGGEVVLHDFLKIEIPAWLHRATIR) are cytoplasmic. 2 helical membrane passes run 335–355 (ILAVAPALYCVWTSGADGIYQ) and 356–376 (LLIFTQVLVAMMLPCSVIPLF). The Cytoplasmic segment spans residues 377–397 (RIASSRQIMGVHKIPQVGEFL). A helical transmembrane segment spans residues 398–418 (ALTTFLGFLGLNVVFVVEMVF). Residues 419-440 (GSSDWAGGLRWNTVMGTSIQYT) lie on the Extracellular side of the membrane. The helical transmembrane segment at 441-461 (TLLVSSCASLCLILWLAATPL) threads the bilayer. Over 462–1294 (KSASNRAEAQ…KNVTAYGSLG (833 aa)) the chain is Cytoplasmic. Disordered stretches follow at residues 534–561 (TDQEIRSSPPEERELDVKYSTSQVSSLK) and 623–662 (ETEEATKAAPTSNFTVGSDGPPSFRSLSGEGGSGTGSLSR). Residues 536–550 (QEIRSSPPEERELDV) show a composition bias toward basic and acidic residues. Phosphoserine occurs at positions 645, 659, and 757. At Thr819 the chain carries Phosphothreonine. Phosphoserine is present on Ser924. Residues 1262-1269 (LKRYKRRL) carry the Nuclear localization signal motif. Residues 1269–1294 (LSNKPVGMNQDGPGSRKNVTAYGSLG) form a disordered region. Phosphoserine is present on Ser1283.

The protein belongs to the NRAMP (TC 2.A.55) family. As to quaternary structure, interacts (via NLS) with ETR1. Interacts (via C-terminus) with EER5 and the COP9 signalosome subunits CSN3, CSN6A and CSN6B. Interacts with ETP1 and ETP2. Interacts with CTR1. Interacts with all members of the ethylene receptor family, including ETR1, ETR2, ERS1, ERS2 and EIN4. Binds to MRF3/ECIP1. Interacts with several P-body components, such as XRN4/EIN5, PAB2, PAB4 and PAB8. Binds to ENAP1 in the presence of ethylene; this reaction facilitates its association with histone. Post-translationally, phosphorylated by CTR1 on at least 4 sites. Phosphorylation of Ser-645 and Ser-924 is involved in repressing EIN2 signaling. Loss of phosphorylation results in nuclear localization of the C-terminus of EIN2. In terms of tissue distribution, localized to the guard cells after methyl jasmonate treatment.

The protein localises to the endoplasmic reticulum membrane. It localises to the nucleus. Its subcellular location is the cytoplasm. Central factor in signaling pathways regulated by ethylene (ET) and involved in various processes including development, plant defense, senescence, nucleotide sugar flux, and tropisms. Necessary for ethylene-mediated gene regulation, and for the induction of some genes by ozone. Acts downstream of ET receptors, and upstream of ethylene regulated transcription factors. Required for cytokinin-mediated processes. Seems to be implicated in cross-talk between ET, jasmonate and other pathways. Probably not involved in iron uptake. Has a short half-life and undergoes rapid proteasome-mediated turnover in the absence of ethylene. Required for ethylene-induced EIN3 stabilization via proteasomal degradation of EBF1/EBF2 proteins. Regulates the leaf senescence induced by methyl jasmonate, ethylene and abscisic acid. Required during salt stress to confer resistance. In terms of biological role, trafficking signal inducing ethylene response. The nuclear localization is both necessary and sufficient to activate EIN3-mediated transcription and ethylene responses. Involved in ethylene (ET)-mediated signaling pathways by triggering histone acetylation of H3K14 and H3K23 in an ENAP1-dependent manner, thus influencing the expression of ethylene-responsive genes. Necessary and sufficient for 3'-UTR-mediated translational repression of EBF1 and EBF2 mRNAs. Ethylene induces EIN2-CEND to associate with 3' UTRs in cytoplasmic foci and target EBF1/2 mRNAs to cytoplasmic processing-body (P-body). MPK6 regulates the cleavage and nuclear translocation of EIN2-CEND under methyl jasmonate treatment. Required for EIN3 accumulation. This is Ethylene-insensitive protein 2 from Arabidopsis thaliana (Mouse-ear cress).